Reading from the N-terminus, the 1199-residue chain is Putative pyruvate-flavodoxin oxidoreductase (1199 aa).

4Fe-4S ferredoxin-type domains are found at residues 681 to 710 and 737 to 766; these read EIPVWDPDVCVQCGKCVIVCPHAVIRGKVY and FTIQVAPEDCTGCGICVDVCPAKNKSQPRL. Residues Cys690, Cys693, Cys696, Cys700, Cys746, Cys749, Cys752, Cys756, Cys820, Cys823, Cys848, and Cys1079 each contribute to the [4Fe-4S] cluster site.

The protein belongs to the pyruvate:ferredoxin/flavodoxin oxidoreductase family. Requires [4Fe-4S] cluster as cofactor.

The enzyme catalyses oxidized [flavodoxin] + pyruvate + CoA + 2 H(+) = reduced [flavodoxin] + acetyl-CoA + CO2. Its function is as follows. Oxidoreductase required for the transfer of electrons from pyruvate to flavodoxin. This is Putative pyruvate-flavodoxin oxidoreductase (nifJ) from Synechocystis sp. (strain ATCC 27184 / PCC 6803 / Kazusa).